The chain runs to 313 residues: Formimidoylglutamase (313 aa).

Mn(2+) contacts are provided by histidine 130, aspartate 155, histidine 157, aspartate 159, aspartate 241, and aspartate 243.

Belongs to the arginase family. It depends on Mn(2+) as a cofactor.

It carries out the reaction N-formimidoyl-L-glutamate + H2O = formamide + L-glutamate. It participates in amino-acid degradation; L-histidine degradation into L-glutamate; L-glutamate from N-formimidoyl-L-glutamate (hydrolase route): step 1/1. In terms of biological role, catalyzes the conversion of N-formimidoyl-L-glutamate to L-glutamate and formamide. The polypeptide is Formimidoylglutamase (Salmonella paratyphi A (strain ATCC 9150 / SARB42)).